Reading from the N-terminus, the 804-residue chain is Probable exo-1,4-beta-xylosidase xlnD (804 aa).

Positions 1–17 (MAVAALALLALLPQALG) are cleaved as a signal peptide. Residues Asn20, Asn115, Asn139, Asn234, and Asn243 are each glycosylated (N-linked (GlcNAc...) asparagine). Asp307 is an active-site residue. Asn349, Asn382, Asn404, Asn433, Asn444, Asn485, Asn489, Asn621, Asn652, Asn666, Asn688, and Asn710 each carry an N-linked (GlcNAc...) asparagine glycan.

Belongs to the glycosyl hydrolase 3 family.

Its subcellular location is the secreted. The enzyme catalyses Hydrolysis of (1-&gt;4)-beta-D-xylans, to remove successive D-xylose residues from the non-reducing termini.. The protein operates within glycan degradation; xylan degradation. Xylan 1,4-beta-xylosidase involved in the hydrolysis of xylan, a major structural heterogeneous polysaccharide found in plant biomass representing the second most abundant polysaccharide in the biosphere, after cellulose. The sequence is that of Probable exo-1,4-beta-xylosidase xlnD (xlnD) from Aspergillus japonicus.